The chain runs to 130 residues: Protein BLT4 (130 aa).

Positions 1–25 (MARTAATKLALVPLVAAMLLVAADA) are cleaved as a signal peptide. Residues 80-130 (VPARTTPAGPQASPPGAASASPTRSAPVSTALRSTDRTRAPHISSDRRLVG) form a disordered region. Residues 84 to 110 (TTPAGPQASPPGAASASPTRSAPVSTA) show a composition bias toward low complexity. The segment covering 113-130 (STDRTRAPHISSDRRLVG) has biased composition (basic and acidic residues).

Belongs to the plant LTP family. In terms of tissue distribution, shoot meristem.

In terms of biological role, possible dehydrative stress responsive protein. Not shown to have lipid transfer activity. The sequence is that of Protein BLT4 (BLT4) from Hordeum vulgare (Barley).